A 59-amino-acid polypeptide reads, in one-letter code: Large ribosomal subunit protein uL30 (59 aa).

It belongs to the universal ribosomal protein uL30 family. Part of the 50S ribosomal subunit.

This is Large ribosomal subunit protein uL30 from Yersinia pseudotuberculosis serotype I (strain IP32953).